The chain runs to 1220 residues: DNA-directed RNA polymerase subunit beta (1220 aa).

Belongs to the RNA polymerase beta chain family. In terms of assembly, the RNAP catalytic core consists of 2 alpha, 1 beta, 1 beta' and 1 omega subunit. When a sigma factor is associated with the core the holoenzyme is formed, which can initiate transcription.

It carries out the reaction RNA(n) + a ribonucleoside 5'-triphosphate = RNA(n+1) + diphosphate. In terms of biological role, DNA-dependent RNA polymerase catalyzes the transcription of DNA into RNA using the four ribonucleoside triphosphates as substrates. The chain is DNA-directed RNA polymerase subunit beta from Mesomycoplasma hyopneumoniae (strain 7448) (Mycoplasma hyopneumoniae).